The following is a 315-amino-acid chain: 1,2-dihydroxy-3,5-cyclohexadiene-1,4-dicarboxylate dehydrogenase (315 aa).

A divalent metal cation is bound by residues His-159, His-203, and His-255.

It belongs to the PdxA family.

It catalyses the reaction (3S,4R)-3,4-dihydroxycyclohexa-1,5-diene-1,4-dicarboxylate + NAD(+) = 3,4-dihydroxybenzoate + CO2 + NADH. Its function is as follows. Involved in the degradation of terephthalate (TPA) via the protocatechuate (PCA) 4,5-cleavage pathway. Catalyzes the dehydrogenation of 1,2-dihydroxy-3,5-cyclohexadiene-1,4-dicarboxylate (DCD) to yield protocatechuate (PCA). In Comamonas sp, this protein is 1,2-dihydroxy-3,5-cyclohexadiene-1,4-dicarboxylate dehydrogenase (tphBI).